We begin with the raw amino-acid sequence, 119 residues long: Beta-2-microglobulin (119 aa).

The first 20 residues, 1–20, serve as a signal peptide directing secretion; the sequence is MARFVVVALLVLLSVSDLEA. Residues 25–114 enclose the Ig-like C1-type domain; the sequence is PKIQVYSRYP…VTFLTPKTVK (90 aa). Cys-45 and Cys-100 are disulfide-bonded.

Belongs to the beta-2-microglobulin family. In terms of assembly, heterodimer of an alpha chain and a beta chain. Beta-2-microglobulin is the beta-chain of major histocompatibility complex class I molecules.

It localises to the secreted. Its function is as follows. Component of the class I major histocompatibility complex (MHC). Involved in the presentation of peptide antigens to the immune system. In Leontocebus fuscicollis (Brown-mantled tamarin), this protein is Beta-2-microglobulin (B2M).